Consider the following 162-residue polypeptide: Podoplanin (162 aa).

Positions 1–22 (MWKVSALLFVLGSASLWVLAEG) are cleaved as a signal peptide. The disordered stretch occupies residues 23–57 (ASTGQPEDDTETTGLEGGVAMPGAEDDVVTPGTSE). Residues 23–131 (ASTGQPEDDT…EKDGLSTVTL (109 aa)) are Extracellular-facing. 10 O-linked (GalNAc...) threonine glycosylation sites follow: Thr25, Thr32, Thr34, Thr35, Thr52, Thr55, Thr65, Thr66, Thr76, and Thr85. Positions 85-108 (TSESTVHAQEQSPSATASNVATSH) are enriched in polar residues. Positions 85–119 (TSESTVHAQEQSPSATASNVATSHSTEKVDGDTQT) are disordered. O-linked (GalNAc...) serine glycosylation is found at Ser86 and Ser88. O-linked (GalNAc...) threonine glycosylation is present at Thr89. 2 O-linked (GalNAc...) serine glycosylation sites follow: Ser96 and Ser98. Thr100 carries O-linked (GalNAc...) threonine glycosylation. Ser102 is a glycosylation site (O-linked (GalNAc...) serine). Residue Thr106 is glycosylated (O-linked (GalNAc...) threonine). O-linked (GalNAc...) serine glycans are attached at residues Ser107 and Ser109. Residues 109–119 (STEKVDGDTQT) are compositionally biased toward basic and acidic residues. Residues Thr110, Thr117, Thr119, and Thr120 are each glycosylated (O-linked (GalNAc...) threonine). The helical transmembrane segment at 132–152 (VGIIVGVLLAIGFIGAIIVVV) threads the bilayer. The tract at residues 133–137 (GIIVG) is requires for dimerization and lipid rafts association. Residues 153–162 (MRKMSGRYSP) lie on the Cytoplasmic side of the membrane. The interval 154–155 (RK) is requires for interaction with MSN and EZR.

This sequence belongs to the podoplanin family. Homodimer. Interacts with CLEC1B; the interaction is independent of CLEC1B glycosylation and activates CLEC1B; the interaction is dependent of sialic acid on O-glycans. Interacts with CD9; this interaction is homophilic and attenuates platelet aggregation and pulmonary metastasis induced by PDPN. Interacts with LGALS8; the interaction is glycosylation-dependent; may participate in connection of the lymphatic endothelium to the surrounding extracellular matrix. Interacts with HSPA9. Interacts (via extracellular domain) with CD44; this interaction is required for PDPN-mediated directional migration and regulation of lamellipodia extension/stabilization during cell spreading and migration. Interacts (via cytoplasmic domain) with MSN and EZR; activates RHOA and promotes epithelial-mesenchymal transition. Interacts with CCL21; relocalized PDPN to the basolateral membrane. Post-translationally, extensively O-glycosylated. Contains sialic acid residues. O-glycosylation is necessary for platelet aggregation activity. Disialylated at Thr-52; sialic acid is critical for platelet-aggregating activity and for CLEC1B interaction. The N-terminus is blocked. In terms of processing, cleaved by a metalloprotease within its extracellular (EC) domain, generating a membrane-bound C-terminal fragment (PCTF33) and an extracellular fragment. The resulting membrane-bound C-terminal fragment (PCTF33) is further processed between Val-150 and Val-151 by PSEN1/gamma-secretase generating the intracellular domain of podoplanin (PICD). Highly expressed in placenta, lung, skeletal muscle and brain. Weakly expressed in brain, kidney and liver. In placenta, expressed on the apical plasma membrane of endothelium. In lung, expressed in alveolar epithelium. Up-regulated in colorectal tumors and expressed in 25% of early oral squamous cell carcinomas.

It is found in the membrane. It localises to the cell projection. Its subcellular location is the lamellipodium membrane. The protein localises to the filopodium membrane. The protein resides in the microvillus membrane. It is found in the ruffle membrane. It localises to the membrane raft. Its subcellular location is the apical cell membrane. The protein localises to the basolateral cell membrane. The protein resides in the invadopodium. It is found in the cytoplasm. It localises to the cytosol. In terms of biological role, mediates effects on cell migration and adhesion through its different partners. During development plays a role in blood and lymphatic vessels separation by binding CLEC1B, triggering CLEC1B activation in platelets and leading to platelet activation and/or aggregation. Interaction with CD9, on the contrary, attenuates platelet aggregation induced by PDPN. Through MSN or EZR interaction promotes epithelial-mesenchymal transition (EMT) leading to ERZ phosphorylation and triggering RHOA activation leading to cell migration increase and invasiveness. Interaction with CD44 promotes directional cell migration in epithelial and tumor cells. In lymph nodes (LNs), controls fibroblastic reticular cells (FRCs) adhesion to the extracellular matrix (ECM) and contraction of the actomyosin by maintaining ERM proteins (EZR; MSN and RDX) and MYL9 activation through association with unknown transmembrane proteins. Engagement of CLEC1B by PDPN promotes FRCs relaxation by blocking lateral membrane interactions leading to reduction of ERM proteins (EZR; MSN and RDX) and MYL9 activation. Through binding with LGALS8 may participate in connection of the lymphatic endothelium to the surrounding extracellular matrix. In keratinocytes, induces changes in cell morphology showing an elongated shape, numerous membrane protrusions, major reorganization of the actin cytoskeleton, increased motility and decreased cell adhesion. Controls invadopodia stability and maturation leading to efficient degradation of the extracellular matrix (ECM) in tumor cells through modulation of RHOC activity in order to activate ROCK1/ROCK2 and LIMK1/LIMK2 and inactivation of CFL1. Required for normal lung cell proliferation and alveolus formation at birth. Does not function as a water channel or as a regulator of aquaporin-type water channels. Does not have any effect on folic acid or amino acid transport. The protein is Podoplanin of Homo sapiens (Human).